A 153-amino-acid chain; its full sequence is UPF0179 protein AF_2154 (153 aa).

Belongs to the UPF0179 family.

The protein is UPF0179 protein AF_2154 of Archaeoglobus fulgidus (strain ATCC 49558 / DSM 4304 / JCM 9628 / NBRC 100126 / VC-16).